Here is a 984-residue protein sequence, read N- to C-terminus: Mast/stem cell growth factor receptor Kit (984 aa).

The N-terminal stretch at M1–T21 is a signal peptide. Over K22 to P514 the chain is Extracellular. Ig-like C2-type domains follow at residues P23 to S97, I98 to R197, P203 to D300, P311 to N395, and F398 to T498. 4 disulfide bridges follow: C44-C87, C129-C178, C144-C175, and C226-C284. N-linked (GlcNAc...) asparagine glycans are attached at residues N227, N260, N314, N351, N395, N448, and N476. C421 and C487 form a disulfide bridge. The chain crosses the membrane as a helical span at residues L515–Y535. Residues K536–V984 lie on the Cytoplasmic side of the membrane. Residue Y558 participates in Mg(2+) binding. 2 positions are modified to phosphotyrosine; by autocatalysis: Y558 and Y560. A Protein kinase domain is found at L579–L926. ATP is bound by residues G586 to V593, K613, and E661 to D667. Phosphotyrosine; by autocatalysis is present on residues Y690 and Y707. Residues R711–S723 show a composition bias toward low complexity. The interval R711–D749 is disordered. A compositionally biased stretch (acidic residues) spans V737 to D749. The active-site Proton acceptor is the D781. R785 is an ATP binding site. N786 and D799 together coordinate Mg(2+). Y812 and Y925 each carry phosphotyrosine; by autocatalysis. The tract at residues P936–R963 is disordered. Residues T944–P960 are compositionally biased toward polar residues.

The protein belongs to the protein kinase superfamily. Tyr protein kinase family. CSF-1/PDGF receptor subfamily. In terms of processing, ubiquitinated. Rapidly ubiquitinated after autophosphorylation induced by kitlg/scf binding, leading to internalization and degradation. Autophosphorylated on tyrosine residues. Phosphorylated tyrosine residues are important for interaction with specific binding partners.

Its subcellular location is the cell membrane. The enzyme catalyses L-tyrosyl-[protein] + ATP = O-phospho-L-tyrosyl-[protein] + ADP + H(+). Its function is as follows. Tyrosine-protein kinase that acts as a cell-surface receptor for the cytokine kitlg/scf and plays an essential role in the regulation of cell survival and proliferation, hematopoiesis, stem cell maintenance, gametogenesis, mast cell development, migration and function, and in melanogenesis. The polypeptide is Mast/stem cell growth factor receptor Kit (kit) (Takifugu rubripes (Japanese pufferfish)).